Here is a 154-residue protein sequence, read N- to C-terminus: Transcriptional repressor NrdR (154 aa).

The segment at 1 to 22 is disordered; it reads MRCPFCGNDDTQVKDSRPTEDN. The segment at 3–34 is a zinc-finger region; that stretch reads CPFCGNDDTQVKDSRPTEDNSAIRRRRFCPAC. Basic and acidic residues predominate over residues 11–22; sequence TQVKDSRPTEDN. The ATP-cone domain maps to 49–139; sequence LTVVKSGGSR…VYKDFREVTD (91 aa).

It belongs to the NrdR family. It depends on Zn(2+) as a cofactor.

Its function is as follows. Negatively regulates transcription of bacterial ribonucleotide reductase nrd genes and operons by binding to NrdR-boxes. In Rhodospirillum centenum (strain ATCC 51521 / SW), this protein is Transcriptional repressor NrdR.